Here is a 404-residue protein sequence, read N- to C-terminus: Cysteine desulfurase IscS (404 aa).

Pyridoxal 5'-phosphate contacts are provided by residues 75 to 76, Asn-155, Gln-183, and 203 to 205; these read AT and SAH. Position 206 is an N6-(pyridoxal phosphate)lysine (Lys-206). Thr-243 is a binding site for pyridoxal 5'-phosphate. Residue Cys-328 is the Cysteine persulfide intermediate of the active site. Cys-328 contacts [2Fe-2S] cluster.

This sequence belongs to the class-V pyridoxal-phosphate-dependent aminotransferase family. NifS/IscS subfamily. Homodimer. Forms a heterotetramer with IscU, interacts with other sulfur acceptors. Pyridoxal 5'-phosphate serves as cofactor.

Its subcellular location is the cytoplasm. The catalysed reaction is (sulfur carrier)-H + L-cysteine = (sulfur carrier)-SH + L-alanine. It functions in the pathway cofactor biosynthesis; iron-sulfur cluster biosynthesis. Master enzyme that delivers sulfur to a number of partners involved in Fe-S cluster assembly, tRNA modification or cofactor biosynthesis. Catalyzes the removal of elemental sulfur atoms from cysteine to produce alanine. Functions as a sulfur delivery protein for Fe-S cluster synthesis onto IscU, an Fe-S scaffold assembly protein, as well as other S acceptor proteins. This is Cysteine desulfurase IscS from Pseudomonas fluorescens (strain ATCC BAA-477 / NRRL B-23932 / Pf-5).